The following is a 227-amino-acid chain: Cytochrome c oxidase subunit 2 (227 aa).

Over 1–14 (MAHPVQLGLQDATS) the chain is Mitochondrial intermembrane. Residues 15–45 (PVMEELITFHDHALMAMSLISLLVLYALFST) form a helical membrane-spanning segment. Residues 46 to 59 (LTTKLTNTNITDAQ) lie on the Mitochondrial matrix side of the membrane. Residues 60–87 (EMEIIWTILPAIILVLIALPSLRILYLT) traverse the membrane as a helical segment. The Mitochondrial intermembrane segment spans residues 88–227 (DEVNNPSFTI…IFEMGPVFTL (140 aa)). Positions 161, 196, 198, 200, 204, and 207 each coordinate Cu cation. Residue glutamate 198 coordinates Mg(2+).

The protein belongs to the cytochrome c oxidase subunit 2 family. Component of the cytochrome c oxidase (complex IV, CIV), a multisubunit enzyme composed of 14 subunits. The complex is composed of a catalytic core of 3 subunits MT-CO1, MT-CO2 and MT-CO3, encoded in the mitochondrial DNA, and 11 supernumerary subunits COX4I, COX5A, COX5B, COX6A, COX6B, COX6C, COX7A, COX7B, COX7C, COX8 and NDUFA4, which are encoded in the nuclear genome. The complex exists as a monomer or a dimer and forms supercomplexes (SCs) in the inner mitochondrial membrane with NADH-ubiquinone oxidoreductase (complex I, CI) and ubiquinol-cytochrome c oxidoreductase (cytochrome b-c1 complex, complex III, CIII), resulting in different assemblies (supercomplex SCI(1)III(2)IV(1) and megacomplex MCI(2)III(2)IV(2)). Found in a complex with TMEM177, COA6, COX18, COX20, SCO1 and SCO2. Interacts with TMEM177 in a COX20-dependent manner. Interacts with COX20. Interacts with COX16. Cu cation serves as cofactor.

It localises to the mitochondrion inner membrane. The catalysed reaction is 4 Fe(II)-[cytochrome c] + O2 + 8 H(+)(in) = 4 Fe(III)-[cytochrome c] + 2 H2O + 4 H(+)(out). Its function is as follows. Component of the cytochrome c oxidase, the last enzyme in the mitochondrial electron transport chain which drives oxidative phosphorylation. The respiratory chain contains 3 multisubunit complexes succinate dehydrogenase (complex II, CII), ubiquinol-cytochrome c oxidoreductase (cytochrome b-c1 complex, complex III, CIII) and cytochrome c oxidase (complex IV, CIV), that cooperate to transfer electrons derived from NADH and succinate to molecular oxygen, creating an electrochemical gradient over the inner membrane that drives transmembrane transport and the ATP synthase. Cytochrome c oxidase is the component of the respiratory chain that catalyzes the reduction of oxygen to water. Electrons originating from reduced cytochrome c in the intermembrane space (IMS) are transferred via the dinuclear copper A center (CU(A)) of subunit 2 and heme A of subunit 1 to the active site in subunit 1, a binuclear center (BNC) formed by heme A3 and copper B (CU(B)). The BNC reduces molecular oxygen to 2 water molecules using 4 electrons from cytochrome c in the IMS and 4 protons from the mitochondrial matrix. The protein is Cytochrome c oxidase subunit 2 (MT-CO2) of Cercocebus galeritus (Tana river mangabey).